A 219-amino-acid polypeptide reads, in one-letter code: Octanoyltransferase (219 aa).

Residues 31–219 (EDLPGFLVFC…KLKRRLLEVL (189 aa)) enclose the BPL/LPL catalytic domain. Substrate contacts are provided by residues 69-76 (RGGRATYH), 153-155 (SVG), and 166-168 (GAA). The active-site Acyl-thioester intermediate is cysteine 184.

This sequence belongs to the LipB family.

It localises to the cytoplasm. The catalysed reaction is octanoyl-[ACP] + L-lysyl-[protein] = N(6)-octanoyl-L-lysyl-[protein] + holo-[ACP] + H(+). It participates in protein modification; protein lipoylation via endogenous pathway; protein N(6)-(lipoyl)lysine from octanoyl-[acyl-carrier-protein]: step 1/2. In terms of biological role, catalyzes the transfer of endogenously produced octanoic acid from octanoyl-acyl-carrier-protein onto the lipoyl domains of lipoate-dependent enzymes. Lipoyl-ACP can also act as a substrate although octanoyl-ACP is likely to be the physiological substrate. This is Octanoyltransferase from Bdellovibrio bacteriovorus (strain ATCC 15356 / DSM 50701 / NCIMB 9529 / HD100).